The primary structure comprises 353 residues: Fe(3+) ions import ATP-binding protein FbpC 1 (353 aa).

Positions 9 to 239 (VVFRNICKQF…PASAFIADFM (231 aa)) constitute an ABC transporter domain. Residue 41 to 48 (GPSGCGKT) participates in ATP binding.

Belongs to the ABC transporter superfamily. Fe(3+) ion importer (TC 3.A.1.10) family. As to quaternary structure, the complex is composed of two ATP-binding proteins (FbpC), two transmembrane proteins (FbpB) and a solute-binding protein (FbpA).

It is found in the cell inner membrane. It catalyses the reaction Fe(3+)(out) + ATP + H2O = Fe(3+)(in) + ADP + phosphate + H(+). In terms of biological role, part of the ABC transporter complex FbpABC involved in Fe(3+) ions import. Responsible for energy coupling to the transport system. The protein is Fe(3+) ions import ATP-binding protein FbpC 1 of Rhizobium meliloti (strain 1021) (Ensifer meliloti).